Reading from the N-terminus, the 371-residue chain is MSEKINLMDLTRQQMREFFKELGEKPFRADQLVKWIYHFGEDNFDNMTNINKKLREKLKQVAEIKAPEVAVEQRSSDGTIKWAMQVGDQQVETVYIPEADRATLCVSSQVGCALACTFCSTAQQGFNRNLTVSEIIGQVWRASKIIGNFGVTGIRPITNVVMMGMGEPLLNMANVVPAMEIMLDDFAYGLSKRRVTISTSGVVPALDKLPEMIDVALAISLHAPNDELRDEIVPINKKYNIKMLMDSVNRYLSVSNANHGKVTIEYVLLDHVNDGTEHAHQLADVLKNTPCKINLIPWNPFPEAPYAKSSNSRVDRFQKTLMEYGFTVTVRKTRGDDIDAACGQLAGDVIDRTKRTAQKKQFGQVIGVVNQ.

The Proton acceptor role is filled by E92. The region spanning 98–337 is the Radical SAM core domain; that stretch reads EADRATLCVS…VTVRKTRGDD (240 aa). An intrachain disulfide couples C105 to C342. [4Fe-4S] cluster contacts are provided by C112, C116, and C119. Residues 166–167, S198, 220–222, and N299 contribute to the S-adenosyl-L-methionine site; these read GE and SLH. Residue C342 is the S-methylcysteine intermediate of the active site.

Belongs to the radical SAM superfamily. RlmN family. It depends on [4Fe-4S] cluster as a cofactor.

The protein localises to the cytoplasm. It catalyses the reaction adenosine(2503) in 23S rRNA + 2 reduced [2Fe-2S]-[ferredoxin] + 2 S-adenosyl-L-methionine = 2-methyladenosine(2503) in 23S rRNA + 5'-deoxyadenosine + L-methionine + 2 oxidized [2Fe-2S]-[ferredoxin] + S-adenosyl-L-homocysteine. The enzyme catalyses adenosine(37) in tRNA + 2 reduced [2Fe-2S]-[ferredoxin] + 2 S-adenosyl-L-methionine = 2-methyladenosine(37) in tRNA + 5'-deoxyadenosine + L-methionine + 2 oxidized [2Fe-2S]-[ferredoxin] + S-adenosyl-L-homocysteine. Its function is as follows. Specifically methylates position 2 of adenine 2503 in 23S rRNA and position 2 of adenine 37 in tRNAs. m2A2503 modification seems to play a crucial role in the proofreading step occurring at the peptidyl transferase center and thus would serve to optimize ribosomal fidelity. This Actinobacillus succinogenes (strain ATCC 55618 / DSM 22257 / CCUG 43843 / 130Z) protein is Dual-specificity RNA methyltransferase RlmN.